Reading from the N-terminus, the 623-residue chain is Heterogeneous nuclear ribonucleoprotein Q (623 aa).

An N-acetylalanine modification is found at A2. A Phosphoserine modification is found at S159. 3 RRM domains span residues 162 to 241, 243 to 325, and 338 to 408; these read TEIF…ISVA, NRLF…WADP, and KVLF…FAKP. A Glycyl lysine isopeptide (Lys-Gly) (interchain with G-Cter in SUMO2) cross-link involves residue K168. Position 221 is an N6-acetyllysine (K221). Residue K363 is modified to N6-acetyllysine. The residue at position 373 (Y373) is a Phosphotyrosine. The tract at residues 400-561 is interaction with APOBEC1; sequence NIEIVFAKPP…GARGGRGGNV (162 aa). R444 is subject to Asymmetric dimethylarginine; by PRMT1; alternate. R444 carries the post-translational modification Omega-N-methylarginine; by PRMT1; alternate. 6 tandem repeats follow at residues 448–450, 451–453, 460–464, 469–472, 478–480, and 485–488. Residues 448-559 form an 8 X 3 AA repeats of R-G-G region; the sequence is RGGRGGYGYP…VRGARGGRGG (112 aa). The tract at residues 460-488 is 3 X 4 AA repeats of Y-Y-G-Y; the sequence is YYGYEDYYDYYGYDYHNYRGGYEDPYYGY. The residue at position 496 (R496) is an Omega-N-methylarginine; by PRMT1. The tract at residues 497–623 is disordered; it reads GRGGRGARGA…YQDTFGQQWK (127 aa). One copy of the 1-4 repeat lies at 498–500; that stretch reads RGG. Over residues 504–522 the composition is skewed to low complexity; sequence RGAAPSRGRGAAPPRGRAG. R510 is subject to Asymmetric dimethylarginine; by PRMT1. R518 carries the asymmetric dimethylarginine; by PRMT1; alternate modification. Position 518 is an omega-N-methylarginine; by PRMT1; alternate (R518). The tract at residues 518–549 is interaction with SMN; that stretch reads RGRAGYSQRGGPGSARGVRGARGGAQQQRGRG. R526 carries the post-translational modification Asymmetric dimethylarginine; alternate. At R526 the chain carries Omega-N-methylarginine; alternate. The 1-5 repeat unit spans residues 526–528; sequence RGG. 2 positions are modified to asymmetric dimethylarginine; by PRMT1; alternate: R536 and R539. 2 positions are modified to omega-N-methylarginine; by PRMT1; alternate: R536 and R539. A run of 3 repeats spans residues 539 to 541, 554 to 556, and 557 to 559. Residues 550 to 562 show a composition bias toward gly residues; the sequence is VRGARGGRGGNVG. A Bipartite nuclear localization signal motif is present at residues 564–578; it reads KRKADGYNQPDTKRR. Residues 580-595 are compositionally biased toward polar residues; sequence TNNQNWGSQPIAQQPL. S587 carries the post-translational modification Phosphoserine. K607 participates in a covalent cross-link: Glycyl lysine isopeptide (Lys-Gly) (interchain with G-Cter in SUMO2). Over residues 611-623 the composition is skewed to polar residues; sequence QEFYQDTFGQQWK.

Identified in the spliceosome C complex. Component of the coding region determinant (CRD)-mediated complex, composed of DHX9, HNRNPU, IGF2BP1, SYNCRIP and YBX1. Identified in a mRNP complex, at least composed of DHX9, DDX3X, ELAVL1, HNRNPU, IGF2BP1, ILF3, PABPC1, PCBP2, PTBP2, STAU1, STAU2, SYNCRIP and YBX1. Identified in a mRNP granule complex, at least composed of ACTB, ACTN4, DHX9, ERG, HNRNPA1, HNRNPA2B1, HNRNPAB, HNRNPD, HNRNPL, HNRNPR, HNRNPU, HSPA1, HSPA8, IGF2BP1, ILF2, ILF3, NCBP1, NCL, PABPC1, PABPC4, PABPN1, RPLP0, RPS3, RPS3A, RPS4X, RPS8, RPS9, SYNCRIP, YBX1 and untranslated mRNAs. Interacts with GTPBP1. Isoform 1 is a component of the APOB mRNA editosome complex. Isoform 1 interacts with APOBEC1 and A1CF. Part of a complex associated with the FOS mCRD domain and consisting of PABPC1, PAIP1, CSDE1/UNR, HNRPD and SYNCRIP. Isoform 2 interacts with HNRPR. Interacts with POLR2A hyperphosphorylated C-terminal domain. Interacts with HABP4. Identified in a histone pre-mRNA complex, at least composed of ERI1, LSM11, SLBP, SNRPB, SYNCRIP and YBX1. Isoform 1 and isoform 2 interact with SMN. Isoform 2 interacts through its C-terminal domain with SYT7, SYT8 and SYT9. The non-phosphorylated and phosphorylated forms are colocalized with PAIP1 in polysomes. Post-translationally, phosphorylated on tyrosine. The membrane-bound form found in microsomes is phosphorylated in vitro by insulin receptor tyrosine kinase (INSR). Phosphorylation is inhibited upon binding to RNA, whereas the cytoplasmic form is poorly phosphorylated. In terms of tissue distribution, ubiquitous. Detected in heart, brain, spleen, lung, liver, skeletal muscle, adipocytes, kidney and testis.

It is found in the nucleus. It localises to the nucleoplasm. Its subcellular location is the microsome. The protein localises to the cytoplasm. Heterogeneous nuclear ribonucleoprotein (hnRNP) implicated in mRNA processing mechanisms. Component of the CRD-mediated complex that promotes MYC mRNA stability. Isoform 1 and isoform 2 are associated in vitro with pre-mRNA, splicing intermediates and mature mRNA protein complexes. Isoform 1 binds to apoB mRNA AU-rich sequences. Isoform 1 is part of the APOB mRNA editosome complex and may modulate the postranscriptional C to U RNA-editing of the APOB mRNA through either by binding to A1CF (APOBEC1 complementation factor), to APOBEC1 or to RNA itself. May be involved in translationally coupled mRNA turnover. Implicated with other RNA-binding proteins in the cytoplasmic deadenylation/translational and decay interplay of the FOS mRNA mediated by the major coding-region determinant of instability (mCRD) domain. Interacts in vitro preferentially with poly(A) and poly(U) RNA sequences. Isoform 2 may be involved in cytoplasmic vesicle-based mRNA transport through interaction with synaptotagmins. This is Heterogeneous nuclear ribonucleoprotein Q (Syncrip) from Mus musculus (Mouse).